Here is a 210-residue protein sequence, read N- to C-terminus: MDQKSDSFLSVSSISFSYSSSTDKDFDLICMISPIVLLYITLLSIIFFVAALIHLLVKFLHRPQTRLDDAYDGITESSTALQGRYQTRFNLHDAEIDQSFIDALPLLHYKTMIGLRHDLSDCAVCLREFTAEDELRLLPKCSHAFHVECIDTWLLTNSTCPLCRDNLLLLGLTGTASSSTIVLVHESDGDNSQDSDSSFMLTDLDDVESK.

A helical transmembrane segment spans residues 35–55 (IVLLYITLLSIIFFVAALIHL). Residues 122–164 (CAVCLREFTAEDELRLLPKCSHAFHVECIDTWLLTNSTCPLCR) form an RING-type; atypical zinc finger. A disordered region spans residues 187–210 (SDGDNSQDSDSSFMLTDLDDVESK).

The protein belongs to the RING-type zinc finger family. ATL subfamily.

The protein localises to the membrane. It catalyses the reaction S-ubiquitinyl-[E2 ubiquitin-conjugating enzyme]-L-cysteine + [acceptor protein]-L-lysine = [E2 ubiquitin-conjugating enzyme]-L-cysteine + N(6)-ubiquitinyl-[acceptor protein]-L-lysine.. It participates in protein modification; protein ubiquitination. This Arabidopsis thaliana (Mouse-ear cress) protein is Putative RING-H2 finger protein ATL50 (ATL50).